The following is a 512-amino-acid chain: Cytochrome P450 monooxygenase adrA (512 aa).

Residues 12-32 (FEPVSLVGLVLLSGLFLLLTA) traverse the membrane as a helical segment. N-linked (GlcNAc...) asparagine glycosylation is found at Asn-86, Asn-149, and Asn-210. Position 453 (Cys-453) interacts with heme.

It belongs to the cytochrome P450 family. The cofactor is heme.

Its subcellular location is the membrane. The protein operates within secondary metabolite biosynthesis; terpenoid biosynthesis. Cytochrome P450 monooxygenase; part of the gene cluster that mediates the biosynthesis of andrastins, meroterpenoid compounds that exhibit inhibitory activity against ras farnesyltransferase, suggesting that they could be promising leads for antitumor agents. The first step of the pathway is the synthesis of 3,5-dimethylorsellinic acid (DMOA) by the polyketide synthase adrD via condensation of one acetyl-CoA starter unit with 3 malonyl-CoA units and 2 methylations. DMAO is then converted to farnesyl-DMAO by the prenyltransferase adrG. The methyltransferase adrK catalyzes the methylation of the carboxyl group of farnesyl-DMAO to farnesyl-DMAO methyl ester which is further converted to epoxyfarnesyl-DMAO methyl ester by the FAD-dependent monooxygenase adrH. The terpene cyclase adrI then catalyzes the carbon skeletal rearrangement to generate the andrastin E, the first compound in the pathway having the andrastin scaffold, with the tetracyclic ring system. The post-cyclization tailoring enzymes adrF, adrE, adrJ, and adrA, are involved in the conversion of andrastin E into andrastin A. The short chain dehydrogenase adrF is responsible for the oxidation of the C-3 a hydroxyl group of andrastin E to yield the corresponding ketone, andrastin D. The ketoreductase adrE stereoselectively reduces the carbonyl moiety to reverse the stereochemistry of the C-3 position to yield andrastin F. The acetyltransferase adrJ is the acetyltransferase that attaches the acetyl group to the C-3 hydroxyl group of andrastin F to yield andrastin C. Finally, the cytochrome P450 monooxygenase adrA catalyzes two sequential oxidation reactions of the C-23 methyl group, to generate the corresponding alcohol andrastin B, and aldehyde andrastin A. This chain is Cytochrome P450 monooxygenase adrA, found in Penicillium rubens (strain ATCC 28089 / DSM 1075 / NRRL 1951 / Wisconsin 54-1255) (Penicillium chrysogenum).